The following is a 211-amino-acid chain: 3,4-dihydroxy-2-butanone 4-phosphate synthase (211 aa).

Residues 37–38 (RE), Asp42, 150–154 (RIGHT), and Glu174 each bind D-ribulose 5-phosphate. Mg(2+) is bound at residue Glu38. Mg(2+) is bound at residue His153.

This sequence belongs to the DHBP synthase family. Homodimer. Requires Mg(2+) as cofactor. Mn(2+) serves as cofactor.

It carries out the reaction D-ribulose 5-phosphate = (2S)-2-hydroxy-3-oxobutyl phosphate + formate + H(+). The protein operates within cofactor biosynthesis; riboflavin biosynthesis; 2-hydroxy-3-oxobutyl phosphate from D-ribulose 5-phosphate: step 1/1. Functionally, catalyzes the conversion of D-ribulose 5-phosphate to formate and 3,4-dihydroxy-2-butanone 4-phosphate. This is 3,4-dihydroxy-2-butanone 4-phosphate synthase from Buchnera aphidicola subsp. Baizongia pistaciae (strain Bp).